A 512-amino-acid polypeptide reads, in one-letter code: Retinaldehyde dehydrogenase 3 (512 aa).

The interval 1-23 (MATANGAVENGQPDGKPPALPRP) is disordered. Position 2 is an N-acetylalanine (Ala2). NAD(+) is bound by residues Lys204, Glu207, and 257-262 (GSTEVG). The Proton acceptor role is filled by Glu280. Cys314 acts as the Nucleophile in catalysis. 2 residues coordinate NAD(+): Gln361 and Glu411.

This sequence belongs to the aldehyde dehydrogenase family. As to quaternary structure, homotetramer.

It is found in the cytoplasm. The catalysed reaction is all-trans-retinal + NAD(+) + H2O = all-trans-retinoate + NADH + 2 H(+). The enzyme catalyses retinal + NAD(+) + H2O = retinoate + NADH + 2 H(+). It carries out the reaction all-trans-13,14-dihydroretinal + NAD(+) + H2O = all-trans-13,14-dihydroretinoate + NADH + 2 H(+). It participates in cofactor metabolism; retinol metabolism. Its function is as follows. Catalyzes the NAD-dependent oxidation of aldehyde substrates, such as all-trans-retinal and all-trans-13,14-dihydroretinal, to their corresponding carboxylic acids, all-trans-retinoate and all-trans-13,14-dihydroretinoate, respectively. High specificity for all-trans-retinal as substrate, can also accept acetaldehyde as substrate in vitro but with lower affinity. Required for the biosynthesis of normal levels of retinoate in the embryonic ocular and nasal regions; a critical lipid in the embryonic development of the eye and the nasal region. The chain is Retinaldehyde dehydrogenase 3 (Aldh1a3) from Rattus norvegicus (Rat).